The following is a 180-amino-acid chain: Colicin-E5 (180 aa).

2 disordered regions span residues 24–143 (AQTD…GSPG) and 155–180 (VTQISDKTDPGWVDDSRIQWGNKNDQ). Residues 54–76 (ESRKKKEDNKRDAEGKLNDELAK) are compositionally biased toward basic and acidic residues. The nuclease stretch occupies residues 74–180 (LAKNKGKIPG…RIQWGNKNDQ (107 aa)). Positions 106–116 (NTVSNGATGTS) are enriched in polar residues. A compositionally biased stretch (basic and acidic residues) spans 160–171 (DKTDPGWVDDSR).

The protein belongs to the colicin/pyosin nuclease family.

In terms of biological role, colicins are polypeptide toxins produced by and active against E.coli and closely related bacteria. This colicin is an endonuclease. The polypeptide is Colicin-E5 (col) (Escherichia coli).